We begin with the raw amino-acid sequence, 239 residues long: Ribosomal RNA large subunit methyltransferase E (239 aa).

Residues 1–20 (MTKAPIAGNRTGRKLGQRVK) form a disordered region. Basic residues predominate over residues 11–20 (TGRKLGQRVK). S-adenosyl-L-methionine-binding residues include glycine 81, tryptophan 83, aspartate 104, aspartate 120, and aspartate 144. Catalysis depends on lysine 184, which acts as the Proton acceptor.

The protein belongs to the class I-like SAM-binding methyltransferase superfamily. RNA methyltransferase RlmE family.

Its subcellular location is the cytoplasm. It carries out the reaction uridine(2552) in 23S rRNA + S-adenosyl-L-methionine = 2'-O-methyluridine(2552) in 23S rRNA + S-adenosyl-L-homocysteine + H(+). In terms of biological role, specifically methylates the uridine in position 2552 of 23S rRNA at the 2'-O position of the ribose in the fully assembled 50S ribosomal subunit. The chain is Ribosomal RNA large subunit methyltransferase E from Rhizobium leguminosarum bv. trifolii (strain WSM2304).